The following is a 459-amino-acid chain: MCDTIAAIATPSGTGGIGIIRISGPKSKERLTELFHSVSPKFTDFKPWMLHRGYLVAPTNEFLDDILAVYMPAPYTFTGEDVVELHCHGGHFLLLTILETVLCKNIRLAKPGEFSQRAFLNGRMDLTQAEAVAELIAASSRNEVLLASNRLKGLLGQKIIDIRRRIEELRVWICLAVDFPEEESGIFPLEKFINGLLEIHEIIQKLIHAAERSRCWKEGVTVALAGAVNAGKSSLLNALLGKERAIVTEHPGTTRDFLEECIIVNSLSIRLIDTAGLRVTSDPIEEQGIQKGREKIDEADVILFIIDGTVGVTEESKLLINNFGVERTILVWNKVDLKVPPSNWTELYTSSQVSGICVSAKTGSGIEELLVLLYNFVLSQHNAQEPTFDTIVPNMRQVEVFSLVLEEIRSLYEDIRSGIPYDLCAVMLENISSMLNSIIGFDTPEEVLNRIFASFCIGK.

Arginine 21, glutamate 84, and arginine 123 together coordinate (6S)-5-formyl-5,6,7,8-tetrahydrofolate. In terms of domain architecture, TrmE-type G spans 219–378 (GVTVALAGAV…LLVLLYNFVL (160 aa)). Residues 229–234 (NAGKSS), 248–254 (TEHPGTT), and 273–276 (DTAG) each bind GTP. Mg(2+) contacts are provided by serine 233 and threonine 254. Lysine 459 is a (6S)-5-formyl-5,6,7,8-tetrahydrofolate binding site.

It belongs to the TRAFAC class TrmE-Era-EngA-EngB-Septin-like GTPase superfamily. TrmE GTPase family. In terms of assembly, homodimer. Heterotetramer of two MnmE and two MnmG subunits. The cofactor is K(+).

The protein resides in the cytoplasm. Exhibits a very high intrinsic GTPase hydrolysis rate. Involved in the addition of a carboxymethylaminomethyl (cmnm) group at the wobble position (U34) of certain tRNAs, forming tRNA-cmnm(5)s(2)U34. The protein is tRNA modification GTPase MnmE of Lawsonia intracellularis (strain PHE/MN1-00).